We begin with the raw amino-acid sequence, 87 residues long: Apolipoprotein C-I (87 aa).

Residues 1–26 form the signal peptide; sequence MRLILSLPVLAVVLAMVLEGPAPAQA.

This sequence belongs to the apolipoprotein C1 family.

Its subcellular location is the secreted. In terms of biological role, inhibitor of lipoprotein binding to the low density lipoprotein (LDL) receptor, LDL receptor-related protein, and very low density lipoprotein (VLDL) receptor. Associates with high density lipoproteins (HDL) and the triacylglycerol-rich lipoproteins in the plasma and makes up about 10% of the protein of the VLDL and 2% of that of HDL. Appears to interfere directly with fatty acid uptake and is also the major plasma inhibitor of cholesteryl ester transfer protein (CETP). Binds free fatty acids and reduces their intracellular esterification. Modulates the interaction of APOE with beta-migrating VLDL and inhibits binding of beta-VLDL to the LDL receptor-related protein. In Pteropus vampyrus (Large flying fox), this protein is Apolipoprotein C-I (APOC1).